The primary structure comprises 117 residues: Ribosome-binding factor A (117 aa).

This sequence belongs to the RbfA family. As to quaternary structure, monomer. Binds 30S ribosomal subunits, but not 50S ribosomal subunits or 70S ribosomes.

It is found in the cytoplasm. One of several proteins that assist in the late maturation steps of the functional core of the 30S ribosomal subunit. Associates with free 30S ribosomal subunits (but not with 30S subunits that are part of 70S ribosomes or polysomes). Required for efficient processing of 16S rRNA. May interact with the 5'-terminal helix region of 16S rRNA. The protein is Ribosome-binding factor A of Leuconostoc mesenteroides subsp. mesenteroides (strain ATCC 8293 / DSM 20343 / BCRC 11652 / CCM 1803 / JCM 6124 / NCDO 523 / NBRC 100496 / NCIMB 8023 / NCTC 12954 / NRRL B-1118 / 37Y).